The primary structure comprises 184 residues: Photosystem I assembly protein Ycf4 (184 aa).

A run of 2 helical transmembrane segments spans residues 19–39 (ISNF…VLVG) and 57–77 (ILFF…LFIS).

The protein belongs to the Ycf4 family.

It localises to the plastid. Its subcellular location is the chloroplast thylakoid membrane. Its function is as follows. Seems to be required for the assembly of the photosystem I complex. The protein is Photosystem I assembly protein Ycf4 of Eucalyptus globulus subsp. globulus (Tasmanian blue gum).